We begin with the raw amino-acid sequence, 425 residues long: 2-methylserine hydroxymethyltransferase (425 aa).

(6S)-5,6,7,8-tetrahydrofolate contacts are provided by residues leucine 126 and 130–132; that span reads GHL. Lysine 235 carries the post-translational modification N6-(pyridoxal phosphate)lysine.

Belongs to the SHMT family. In terms of assembly, homodimer. Requires pyridoxal 5'-phosphate as cofactor.

It is found in the cytoplasm. The enzyme catalyses (6R)-5,10-methylene-5,6,7,8-tetrahydrofolate + D-alanine + H2O = 2-methylserine + (6S)-5,6,7,8-tetrahydrofolate. The protein operates within one-carbon metabolism; tetrahydrofolate interconversion. Its function is as follows. Catalyzes the reversible interconversion of alpha-methyl-L-serine to D-alanine with tetrahydrofolate (THF) serving as the one-carbon carrier. Cannot use alpha-methyl-D-serine, L-serine, D-serine or L-alanine. The polypeptide is 2-methylserine hydroxymethyltransferase (Aminobacter sp).